A 244-amino-acid polypeptide reads, in one-letter code: Osmotin-like protein OSM34 (244 aa).

An N-terminal signal peptide occupies residues 1 to 22 (MANLLVSTFIFSALLLISTATA). 8 disulfides stabilise this stretch: Cys31-Cys222, Cys72-Cys82, Cys87-Cys93, Cys138-Cys212, Cys143-Cys195, Cys151-Cys161, Cys165-Cys174, and Cys175-Cys182.

Belongs to the thaumatin family.

This chain is Osmotin-like protein OSM34 (OSM34), found in Arabidopsis thaliana (Mouse-ear cress).